The sequence spans 95 residues: UPF0213 protein YPA_2977 (95 aa).

Residues 4 to 79 (SLWHLYLLRT…KQLSKQQKEK (76 aa)) enclose the GIY-YIG domain.

It belongs to the UPF0213 family.

This chain is UPF0213 protein YPA_2977, found in Yersinia pestis bv. Antiqua (strain Antiqua).